A 229-amino-acid polypeptide reads, in one-letter code: uncharacterized protein (229 aa).

Transmembrane regions (helical) follow at residues 21 to 41, 56 to 76, 83 to 103, 109 to 129, 141 to 161, 162 to 182, and 202 to 222; these read IYSL…LMLY, MIYY…SGAA, ALPI…FIIV, TVFQ…IIGV, AMFA…FIGS, GMMS…LIAS, and WAVA…ISLL.

The protein belongs to the BI1 family.

Its subcellular location is the cell membrane. This is an uncharacterized protein from Streptococcus pyogenes serotype M3 (strain ATCC BAA-595 / MGAS315).